Here is a 1455-residue protein sequence, read N- to C-terminus: Membrane-associated guanylate kinase, WW and PDZ domain-containing protein 2 (1455 aa).

Residues Glu17–Gly101 enclose the PDZ 1 domain. One can recognise a Guanylate kinase-like domain in the interval Arg109–Leu283. The interval Pro205–Asp306 is disordered. Residues Val241–Glu252 show a composition bias toward low complexity. Positions Glu281–Glu296 are enriched in basic and acidic residues. 2 consecutive WW domains span residues Asp302–Leu335 and Asn348–Leu381. The interval Asp302–Leu381 is interaction with DDN. Tyr362 carries the phosphotyrosine modification. PDZ domains follow at residues Ser426–Tyr510 and Thr605–Gly683. Ser686 carries the post-translational modification Phosphoserine. The PDZ 4 domain maps to Asp778 to Arg860. Tyr827 bears the Phosphotyrosine mark. A disordered region spans residues Cys869–Ser913. Phosphoserine is present on residues Ser884 and Ser885. The segment covering Asn895 to Pro908 has biased composition (low complexity). Residues Asp920–Glu1010 form the PDZ 5 domain. Polar residues predominate over residues Glu1011 to Ala1040. Residues Glu1011–Asp1136 are disordered. A Phosphoserine modification is found at Ser1014. A compositionally biased stretch (basic and acidic residues) spans Asn1067 to Ile1083. One can recognise a PDZ 6 domain in the interval Thr1147 to Thr1229. Positions Gln1231 to Arg1455 are disordered. Low complexity predominate over residues Pro1238–Pro1249. Residues Asp1287–Glu1299 show a composition bias toward basic and acidic residues. 3 stretches are compositionally biased toward low complexity: residues Glu1346–Ala1363, Ala1399–Pro1412, and Ala1422–Pro1433.

This sequence belongs to the MAGUK family. As to quaternary structure, interacts (via its WW domains) with DRPLA. Interacts (via its second PDZ domain) with PTEN (via unphosphorylated C-terminus); this interaction diminishes the degradation rate of PTEN. Interacts (via guanylate kinase domain) with DLGAP1. Interacts (via the PDZ domains) with GRIN2A, GRID2 and NLGN1. Interacts with CTNND2, CTNNB1, MAGUIN-1, ACVR2A, SMAD2 and SMAD3. Part of a complex consisting of MAGI2/ARIP1, ACVR2A, ACVR1B and SMAD3. May interact with HTR2A. Interacts with IGSF9, RAPGEF2 and HTR4. Identified in a complex with ACTN4, CASK, IQGAP1, NPHS1, SPTAN1 and SPTBN1. Found in a complex, at least composed of KIDINS220, MAGI2, NTRK1 and RAPGEF2; the complex is mainly formed at late endosomes in a NGF-dependent manner. Interacts with RAPGEF2; the interaction occurs before or after nerve growth factor (NGF) stimulation. Interacts (via PDZ domain) with KIDINS220 (via C-terminal domain). Interacts with DDN. Interacts with DLL1. Found in a complex with IGSF9B and NLGN2; the interaction with IGSF9B is mediated via the PDZ 5 and PDZ 6 domains, while the interaction with NLGN2 is mediated via the WW1, WW2 and PDZ2 domains. Interacts (via PDZ 6 domain) with USH1G (via SAM domain); the interaction is triggered by phosphorylation of USH1G by CK2 and negatively regulates MAGI2-mediated endocytosis. Specifically expressed in brain.

The protein resides in the cytoplasm. The protein localises to the late endosome. Its subcellular location is the synapse. It is found in the synaptosome. It localises to the cell membrane. The protein resides in the cytoskeleton. The protein localises to the microtubule organizing center. Its subcellular location is the centrosome. It is found in the cell projection. It localises to the cilium. The protein resides in the centriole. The protein localises to the photoreceptor inner segment. Its subcellular location is the photoreceptor outer segment. Functionally, seems to act as a scaffold molecule at synaptic junctions by assembling neurotransmitter receptors and cell adhesion proteins. Plays a role in nerve growth factor (NGF)-induced recruitment of RAPGEF2 to late endosomes and neurite outgrowth. May play a role in regulating activin-mediated signaling in neuronal cells. Enhances the ability of PTEN to suppress AKT1 activation. Plays a role in receptor-mediated clathrin-dependent endocytosis which is required for ciliogenesis. In Homo sapiens (Human), this protein is Membrane-associated guanylate kinase, WW and PDZ domain-containing protein 2 (MAGI2).